The following is a 625-amino-acid chain: Acetolactate synthase (625 aa).

The disordered stretch occupies residues 1–29; that stretch reads MSAPTKPHARPQGAGNSVPNTVKPATQFP. Over residues 14-29 the composition is skewed to polar residues; that stretch reads AGNSVPNTVKPATQFP. Residue Glu-92 participates in thiamine diphosphate binding. Residues Arg-194, 300–321, and 343–362 contribute to the FAD site; these read HGTVAAVAALQRSDLLIALGTR and DIDPAEIGKNRHADVPIVGD. The segment at 436–516 is thiamine pyrophosphate binding; the sequence is QHQMWAAQFI…IKVALINNGN (81 aa). 2 residues coordinate Mg(2+): Asp-487 and Asn-514.

Belongs to the TPP enzyme family. Mg(2+) serves as cofactor. Thiamine diphosphate is required as a cofactor.

The enzyme catalyses 2 pyruvate + H(+) = (2S)-2-acetolactate + CO2. Its pathway is amino-acid biosynthesis; L-isoleucine biosynthesis; L-isoleucine from 2-oxobutanoate: step 1/4. It functions in the pathway amino-acid biosynthesis; L-valine biosynthesis; L-valine from pyruvate: step 1/4. The chain is Acetolactate synthase (ilvB) from Mycobacterium leprae (strain TN).